The primary structure comprises 340 residues: Ferredoxin--NADP reductase (340 aa).

FAD-binding residues include Asp-33, Gln-41, Tyr-46, Ala-86, Phe-120, Asp-286, and Thr-327.

Belongs to the ferredoxin--NADP reductase type 2 family. As to quaternary structure, homodimer. It depends on FAD as a cofactor.

It carries out the reaction 2 reduced [2Fe-2S]-[ferredoxin] + NADP(+) + H(+) = 2 oxidized [2Fe-2S]-[ferredoxin] + NADPH. This is Ferredoxin--NADP reductase from Rickettsia rickettsii (strain Sheila Smith).